The following is a 38-amino-acid chain: Photosystem II reaction center protein L (38 aa).

A helical membrane pass occupies residues 17 to 37; it reads SLYWGLLLMFVLAVLFSSYFF.

The protein belongs to the PsbL family. PSII is composed of 1 copy each of membrane proteins PsbA, PsbB, PsbC, PsbD, PsbE, PsbF, PsbH, PsbI, PsbJ, PsbK, PsbL, PsbM, PsbT, PsbX, PsbY, PsbZ, Psb30/Ycf12, at least 3 peripheral proteins of the oxygen-evolving complex and a large number of cofactors. It forms dimeric complexes.

It is found in the plastid. The protein resides in the chloroplast thylakoid membrane. In terms of biological role, one of the components of the core complex of photosystem II (PSII). PSII is a light-driven water:plastoquinone oxidoreductase that uses light energy to abstract electrons from H(2)O, generating O(2) and a proton gradient subsequently used for ATP formation. It consists of a core antenna complex that captures photons, and an electron transfer chain that converts photonic excitation into a charge separation. This subunit is found at the monomer-monomer interface and is required for correct PSII assembly and/or dimerization. This chain is Photosystem II reaction center protein L, found in Emiliania huxleyi (Coccolithophore).